The following is a 129-amino-acid chain: Small ribosomal subunit protein uS9 (129 aa).

This sequence belongs to the universal ribosomal protein uS9 family.

In Helicobacter pylori (strain J99 / ATCC 700824) (Campylobacter pylori J99), this protein is Small ribosomal subunit protein uS9 (rpsI).